A 100-amino-acid chain; its full sequence is Small ribosomal subunit protein bS20 (100 aa).

This sequence belongs to the bacterial ribosomal protein bS20 family.

In terms of biological role, binds directly to 16S ribosomal RNA. The sequence is that of Small ribosomal subunit protein bS20 from Synechococcus sp. (strain JA-3-3Ab) (Cyanobacteria bacterium Yellowstone A-Prime).